The primary structure comprises 416 residues: Squamosa promoter-binding-like protein 8 (416 aa).

Residues 11 to 51 are disordered; it reads SSCDDFGYNATPPPPPSLLPIMDQDGGGGSIQRDHHQHHNH. The segment at 182 to 260 adopts an SBP-type zinc-finger fold; it reads PPRCQAEGCK…ADHNRRRRKS (79 aa). Cys185, Cys190, Cys207, His210, Cys227, Cys230, His234, and Cys246 together coordinate Zn(2+). The Bipartite nuclear localization signal signature appears at 243–259; sequence KKSCRKRLADHNRRRRK. The tract at residues 250 to 299 is disordered; sequence LADHNRRRRKSKPSDGEHSGEKRRAQANKSAATKDKAGSSSKNAGIGDGF. Basic and acidic residues predominate over residues 261–273; it reads KPSDGEHSGEKRR.

As to expression, expressed in stems, leaf sheaths, and young panicles. Weakly expressed in ligules, auricles, and leaf sheaths at the basal region.

The protein resides in the nucleus. Functionally, probable transcription factor that plays an important role in building the laminar joint between leaf blade and leaf sheath boundary, thereby controlling ligule and auricle development. This Oryza sativa subsp. japonica (Rice) protein is Squamosa promoter-binding-like protein 8 (SPL8).